The sequence spans 424 residues: Histidine--tRNA ligase (424 aa).

The protein belongs to the class-II aminoacyl-tRNA synthetase family. Homodimer.

It localises to the cytoplasm. It carries out the reaction tRNA(His) + L-histidine + ATP = L-histidyl-tRNA(His) + AMP + diphosphate + H(+). The protein is Histidine--tRNA ligase of Sodalis glossinidius (strain morsitans).